The primary structure comprises 410 residues: Indoleamine 2,3-dioxygenase nanC (410 aa).

H309 lines the heme pocket.

Belongs to the indoleamine 2,3-dioxygenase family. The cofactor is heme.

It carries out the reaction D-tryptophan + O2 = N-formyl-D-kynurenine. The enzyme catalyses L-tryptophan + O2 = N-formyl-L-kynurenine. It functions in the pathway secondary metabolite biosynthesis. Indoleamine 2,3-dioxygenase; part of the gene cluster that mediates the biosynthesis of the benzazepine alkaloid nanangelenin A which contains an unprecedented 3,4-dihydro-1-benzazepine-2,5-dione-N-prenyl-N-acetoxy-anthranilamide scaffold. The first step of nanangelenin biosynthesis is catalyzed by the indoleamine 2,3-dioxygenase nanC which produces N-formyl-kynurenine through the catabolism of tryptophan. The two-module NRPS nanA then utilizes anthranilate (Ant) and L-kynurenine (L-Kyn) to assemble the dipeptide product nanangelenin B. The first adenylation domain of nanA (A1) loads anthranilate onto the T1 domain, while A2 loads kynurenine, generated through spontaneous nonenzymatic deformylation of the nanC-supplied N-formyl-kynurenine. The peptide bond formation between the tethered amino acids is catalyzed by the first condensation domain (C1) between anthranilate's carbonyl carbon and kynurenine's aliphatic primary amine. The second C domain (C2) catalyzes the final cyclization event between the aromatic amine of kynurenine and the tethered carbonyl carbon, yielding nanangelenin B. The terminal T3 domain enhances the catalytic efficiency of C2, suggesting the T2-tethered Ant-L-Kyn is transferred to T3 prior to cyclization by C2. Once released from nanA, nanangelenin B is then prenylated by the prenyltransferase nanD to form nanangelenin C. Nanangelenin C is then N-hydroxylated by the FAD-dependent monooxygenase nanF and further acetylated by the acetyltransferase nanB to yield nanangelenin F. Finally, the N-methyltransferase nanE methylates the amide nitrogen of 1-benzazepine to convert nanangelenin F into nanangelenin A. NanE is also able to methylate most of the intermediates of the pathway such as nanangelenin B and nanangelenin C to produce nanangelenin D and nanangelenin E, respectively. The protein is Indoleamine 2,3-dioxygenase nanC of Aspergillus nanangensis.